Reading from the N-terminus, the 536-residue chain is GMP synthase [glutamine-hydrolyzing] (536 aa).

The region spanning 19–212 (RILILDFGSQ…VHEICDCAGS (194 aa)) is the Glutamine amidotransferase type-1 domain. Cys96 functions as the Nucleophile in the catalytic mechanism. Catalysis depends on residues His186 and Glu188. In terms of domain architecture, GMPS ATP-PPase spans 213-411 (WTPDNIIDMR…LGLPAKMINR (199 aa)). 240–246 (SGGVDSS) contacts ATP.

As to quaternary structure, homodimer.

The catalysed reaction is XMP + L-glutamine + ATP + H2O = GMP + L-glutamate + AMP + diphosphate + 2 H(+). Its pathway is purine metabolism; GMP biosynthesis; GMP from XMP (L-Gln route): step 1/1. Catalyzes the synthesis of GMP from XMP. This is GMP synthase [glutamine-hydrolyzing] from Psychrobacter arcticus (strain DSM 17307 / VKM B-2377 / 273-4).